The sequence spans 544 residues: Tyrosine-protein kinase fynb (544 aa).

Gly2 is lipidated: N-myristoyl glycine. Residues Cys3 and Cys6 are each lipidated (S-palmitoyl cysteine). The SH3 domain occupies 89 to 150 (TGVTLFVALY…PSNYVAPVDS (62 aa)). In terms of domain architecture, SH2 spans 156 to 253 (WYFGKLGRKD…GLCCRLVVPC (98 aa)). Residues 278–531 (LQLIKRLGNG…YLQAFLEDYF (254 aa)) form the Protein kinase domain. ATP is bound by residues 284-292 (LGNGQFGEV) and Lys306. Asp397 (proton acceptor) is an active-site residue. At Tyr427 the chain carries Phosphotyrosine; by autocatalysis. Residue Tyr538 is modified to Phosphotyrosine.

This sequence belongs to the protein kinase superfamily. Tyr protein kinase family. SRC subfamily. It depends on Mn(2+) as a cofactor.

Its subcellular location is the cytoplasm. It carries out the reaction L-tyrosyl-[protein] + ATP = O-phospho-L-tyrosyl-[protein] + ADP + H(+). Its activity is regulated as follows. Inhibited by phosphorylation of Tyr-538 by leukocyte common antigen and activated by dephosphorylation of this site. Tyrosine-protein kinase implicated in the control of cell growth. Plays a role in the regulation of intracellular calcium levels. Required in brain development and mature brain function with important roles in the regulation of axon growth, axon guidance, and neurite extension. Role in CNTN1-mediated signaling. The polypeptide is Tyrosine-protein kinase fynb (fynb) (Danio rerio (Zebrafish)).